The sequence spans 212 residues: uncharacterized protein (212 aa).

2 disordered regions span residues Met1–Asn25 and Ser165–Gly212. The span at Arg202–Gly212 shows a compositional bias: low complexity.

This is an uncharacterized protein from Escherichia coli (strain K12).